A 65-amino-acid chain; its full sequence is Protein translocase subunit SecE (65 aa).

Residues 1–34 (MEKLRKFFREVIAEAKKISWPSRKELLTSFGVVL) lie on the Cytoplasmic side of the membrane. The helical transmembrane segment at 35–51 (VILAVTSVYFFVLDFIF) threads the bilayer. Over 52–65 (SGVVSAIFKALGIG) the chain is Extracellular.

It belongs to the SecE/SEC61-gamma family. Component of the Sec protein translocase complex. Heterotrimer consisting of SecY, SecE and SecG subunits. The heterotrimers can form oligomers, although 1 heterotrimer is thought to be able to translocate proteins. Interacts with SecDF, and other proteins may be involved. The channel interacts with SecA via subunit SecY.

It localises to the cell inner membrane. Essential subunit of the protein translocation channel SecYEG. Clamps together the 2 halves of SecY. May contact the channel plug during translocation. This chain is Protein translocase subunit SecE, found in Thermotoga maritima (strain ATCC 43589 / DSM 3109 / JCM 10099 / NBRC 100826 / MSB8).